The following is a 180-amino-acid chain: Ribulose bisphosphate carboxylase small subunit, chloroplastic 2 (180 aa).

The N-terminal 54 residues, 1-54, are a transit peptide targeting the chloroplast; the sequence is MASMMSNAAVVGRTTPAQASMVAPFTGLKSVSAFPVTKKSNDITSIASNGGRVQ.

It belongs to the RuBisCO small chain family. In terms of assembly, heterohexadecamer of 8 large and 8 small subunits.

The protein resides in the plastid. Its subcellular location is the chloroplast. Its function is as follows. RuBisCO catalyzes two reactions: the carboxylation of D-ribulose 1,5-bisphosphate, the primary event in carbon dioxide fixation, as well as the oxidative fragmentation of the pentose substrate. Both reactions occur simultaneously and in competition at the same active site. Although the small subunit is not catalytic it is essential for maximal activity. This chain is Ribulose bisphosphate carboxylase small subunit, chloroplastic 2, found in Mesembryanthemum crystallinum (Common ice plant).